Here is a 134-residue protein sequence, read N- to C-terminus: DNA-binding protein inhibitor ID-2 (134 aa).

The disordered stretch occupies residues 1-24; it reads MKAFSPVRSVRKNSLSDHGLGISR. Residues serine 14 and serine 25 each carry the phosphoserine modification. Positions 23 to 75 constitute a bHLH domain; that stretch reads SRSKTPVDDPMSLLYNMNDCYSKLKELVPSIPQNKKVSKMEILQHVIDYILDL. Residues 106–115 carry the Nuclear export signal motif; it reads LNTDISILSL.

As to quaternary structure, interacts with GATA4 and NKX2-5. Interacts with NR0B2. Interacts with CLOCK and BMAL1. Interacts with IFI204. Interacts with NEDD9/HEF1. Interacts with ASB4; this interaction promotes ID2 proteasomal degradation. Ubiquitinated in a ASB4-depedent manner, leading to proteasomal degradation. Post-translationally, phosphorylated in vitro by CDK1, PKA and PKC.

The protein resides in the cytoplasm. The protein localises to the nucleus. Transcriptional regulator (lacking a basic DNA binding domain) which negatively regulates the basic helix-loop-helix (bHLH) transcription factors by forming heterodimers and inhibiting their DNA binding and transcriptional activity. Implicated in regulating a variety of cellular processes, including cellular growth, senescence, differentiation, apoptosis, angiogenesis, and neoplastic transformation. Inhibits skeletal muscle and cardiac myocyte differentiation. Regulates the circadian clock by repressing the transcriptional activator activity of the CLOCK-BMAL1 heterodimer. Restricts the CLOCK and BMAL1 localization to the cytoplasm. Plays a role in both the input and output pathways of the circadian clock: in the input component, is involved in modulating the magnitude of photic entrainment and in the output component, contributes to the regulation of a variety of liver clock-controlled genes involved in lipid metabolism. The polypeptide is DNA-binding protein inhibitor ID-2 (ID2) (Bos taurus (Bovine)).